We begin with the raw amino-acid sequence, 406 residues long: Vacuole membrane protein 1 (406 aa).

The segment covering 1 to 20 has biased composition (basic and acidic residues); it reads MAENGKNCDQRRIAMSKDQH. The tract at residues 1–37 is disordered; the sequence is MAENGKNCDQRRIAMSKDQHNGSLTDPSSVHEKKRRD. Alanine 2 is modified (N-acetylalanine). Residues 2 to 77 are Cytoplasmic-facing; sequence AENGKNCDQR…WTSKLWHRQS (76 aa). A helical membrane pass occupies residues 78 to 98; that stretch reads IVVSFLLLLAALVATYYVEGA. The Extracellular portion of the chain corresponds to 99 to 109; sequence HQQYVQRIEKQ. Residues 110–130 traverse the membrane as a helical segment; the sequence is FLLYAYWIGLGILSSVGLGTG. Topologically, residues 131–250 are cytoplasmic; that stretch reads LHTFLLYLGP…ASRAKLAVQK (120 aa). The VTT domain stretch occupies residues 173-316; sequence GAEGAISLWS…FVIVTFSKHI (144 aa). The chain crosses the membrane as a helical span at residues 251–271; the sequence is LVQKVGFFGILACASIPNPLF. Over 272–273 the chain is Extracellular; sequence DL. Residues 274-294 traverse the membrane as a helical segment; that stretch reads AGITCGHFLVPFWTFFGATLI. Residues 295–305 lie on the Cytoplasmic side of the membrane; sequence GKAIIKMHIQK. A helical transmembrane segment spans residues 306 to 326; that stretch reads IFVIVTFSKHIVEQMVTFIGA. Residues 327–363 lie on the Extracellular side of the membrane; sequence VPGIGPSLQKPFQEYLEAQRQKLHHRSEAGTPQGENW. A helical membrane pass occupies residues 364-384; the sequence is LSWMFEKLVVAMVCYFVLSII. The Cytoplasmic segment spans residues 385–406; the sequence is NSMAQNYAKRIQQRLNSEEKTK.

This sequence belongs to the VMP1 family. In terms of assembly, interacts with BECN1. Interacts with TJP1. Interacts with TP53INP2. Interacts with TMEM41B. Interacts with ATP2A2, PLN and SLN; competes with PLN and SLN to prevent them from forming an inhibitory complex with ATP2A2. Interacts with ATG2A.

The protein resides in the endoplasmic reticulum-Golgi intermediate compartment membrane. It localises to the cell membrane. Its subcellular location is the vacuole membrane. The protein localises to the endoplasmic reticulum membrane. It carries out the reaction a 1,2-diacyl-sn-glycero-3-phospho-L-serine(in) = a 1,2-diacyl-sn-glycero-3-phospho-L-serine(out). The catalysed reaction is cholesterol(in) = cholesterol(out). The enzyme catalyses a 1,2-diacyl-sn-glycero-3-phosphocholine(in) = a 1,2-diacyl-sn-glycero-3-phosphocholine(out). It catalyses the reaction a 1,2-diacyl-sn-glycero-3-phosphoethanolamine(in) = a 1,2-diacyl-sn-glycero-3-phosphoethanolamine(out). Its function is as follows. Phospholipid scramblase involved in lipid homeostasis and membrane dynamics processes. Has phospholipid scramblase activity toward cholesterol and phosphatidylserine, as well as phosphatidylethanolamine and phosphatidylcholine. Required for autophagosome formation: participates in early stages of autophagosome biogenesis at the endoplasmic reticulum (ER) membrane by reequilibrating the leaflets of the ER as lipids are extracted by ATG2 (ATG2A or ATG2B) to mediate autophagosome assembly. Regulates ATP2A2 activity to control ER-isolation membrane contacts for autophagosome formation. In addition to autophagy, involved in other processes in which phospholipid scramblase activity is required. Modulates ER contacts with lipid droplets, mitochondria and endosomes. Plays an essential role in formation of cell junctions. Upon stress such as bacterial and viral infection, promotes formation of cytoplasmic vacuoles followed by cell death. Involved in the cytoplasmic vacuolization of acinar cells during the early stage of acute pancreatitis. This chain is Vacuole membrane protein 1, found in Mus musculus (Mouse).